Consider the following 602-residue polypeptide: Putative ankyrin repeat protein L100 (602 aa).

ANK repeat units follow at residues 133-162, 269-294, 295-324, 325-354, 355-384, 386-414, 416-444, 445-474, 476-504, 506-534, and 536-566; these read VLFY…SLIS, YLEK…KKSI, NKER…NINL, LKGT…DIHI, RDNA…DIHT, SSQA…DIRS, ENIL…DVLS, KGVE…DICA, DNEA…DVKA, DNEA…DITA, and NNEA…DVHA.

The protein is Putative ankyrin repeat protein L100 of Acanthamoeba polyphaga mimivirus (APMV).